The primary structure comprises 526 residues: Alpha-N-acetylgalactosaminide alpha-2,6-sialyltransferase 1 (526 aa).

Residues 1–12 (MTRYCRGLSQRQ) lie on the Cytoplasmic side of the membrane. A helical; Signal-anchor for type II membrane protein transmembrane segment spans residues 13-33 (AFLLLTVLALLFILLFVVKDP). Topologically, residues 34-526 (RAKDSRCQFI…QRPQSDKAKN (493 aa)) are lumenal. Residues 49 to 182 (SAQENQQKAE…TRRRQRLKAS (134 aa)) form a disordered region. Positions 81 to 106 (KDLKKQEREAVQGEQAEGKEKRKLET) are enriched in basic and acidic residues. Residues 161–171 (ATKSPASSPHP) show a composition bias toward polar residues. 5 N-linked (GlcNAc...) asparagine glycosylation sites follow: Asn206, Asn228, Asn259, Asn303, and Asn388. Intrachain disulfides connect Cys207-Cys290 and Cys293-Cys461.

It belongs to the glycosyltransferase 29 family. Glycosylated; autosialylated. Submaxillary gland, mammary gland, spleen and colon.

The protein resides in the golgi apparatus membrane. It carries out the reaction a beta-D-galactosyl-(1-&gt;3)-N-acetyl-alpha-D-galactosaminyl derivative + CMP-N-acetyl-beta-neuraminate = a beta-D-galactosyl-(1-&gt;3)-[N-acetyl-alpha-neuraminyl-(2-&gt;6)]-N-acetyl-alpha-D-galactosaminyl derivative + CMP + H(+). The enzyme catalyses a 3-O-[N-acetyl-alpha-D-galactosaminyl]-L-seryl-[protein] + CMP-N-acetyl-beta-neuraminate = a 3-O-[N-acetyl-alpha-neuraminosyl-(2-&gt;6)-N-acetyl-alpha-D-galactosaminyl]-L-seryl-[protein] + CMP + H(+). The catalysed reaction is a 3-O-[N-acetyl-alpha-D-galactosaminyl]-L-threonyl-[protein] + CMP-N-acetyl-beta-neuraminate = a 3-O-[N-acetyl-alpha-neuraminosyl-(2-&gt;6)-N-acetyl-alpha-D-galactosaminyl]-L-threonyl-[protein] + CMP + H(+). It catalyses the reaction a 3-O-[beta-D-galactosyl-(1-&gt;3)-N-acetyl-alpha-D-galactosaminyl]-L-seryl-[protein] + CMP-N-acetyl-beta-neuraminate = a 3-O-{beta-D-galactosyl-(1-&gt;3)-[N-acetyl-alpha-neuraminosyl-(2-&gt;6)]-N-acetyl-alpha-D-galactosaminyl}-L-seryl-[protein] + CMP + H(+). It carries out the reaction a 3-O-[beta-D-galactosyl-(1-&gt;3)-N-acetyl-alpha-D-galactosaminyl]-L-threonyl-[protein] + CMP-N-acetyl-beta-neuraminate = a 3-O-{beta-D-galactosyl-(1-&gt;3)-[N-acetyl-alpha-neuraminosyl-(2-&gt;6)]-N-acetyl-alpha-D-galactosaminyl}-L-threonyl-[protein] + CMP + H(+). The enzyme catalyses a 3-O-[N-acetyl-alpha-neuraminyl-(2-&gt;3)-beta-D-galactosyl-(1-&gt;3)-N-acetyl-alpha-D-galactosaminyl]-L-threonyl-[protein] + CMP-N-acetyl-beta-neuraminate = a 3-O-{alpha-Neu5Ac-(2-&gt;3)-beta-D-Gal-(1-&gt;3)-[alpha-Neu5Ac-(2-&gt;6)]-alpha-D-GalNAc}-L-threonyl-[protein] + CMP + H(+). It participates in protein modification; protein glycosylation. Protein sialyltransferase specifically expressed in goblet cells that plays a key role in intestinal host-commensal homeostasis. Conjugates sialic acid with an alpha-2-6 linkage to N-acetylgalactosamine (GalNAc) glycan chains linked to serine or threonine in glycoproteins. Catalyzes the formation of the sialyl-Tn (S-Tn) antigen, an antigen found in intestinal goblet cells. Protein sialylation in globlet cells is essential for mucus integrity and is required to protect the intestinal mucus against excessive bacterial proteolytic degradation. The sequence is that of Alpha-N-acetylgalactosaminide alpha-2,6-sialyltransferase 1 from Mus musculus (Mouse).